A 437-amino-acid chain; its full sequence is Doublesex- and mab-3-related transcription factor A2 (437 aa).

The segment at residues 49 to 96 is a DNA-binding region (DM); that stretch reads CARCRNHGVVSALKGHKRYCRWKDCMCAKCTLIAERQRVMAAQVALRR. Residues 160 to 253 form a disordered region; sequence IPRSMTPQLP…DPSSSSLARQ (94 aa). Low complexity-rich tracts occupy residues 179-201 and 223-235; these read SEPV…SGSE and SPSL…SESG. In terms of domain architecture, DMA spans 254–289; the sequence is RTPINILTRVFPAQKRSVLELVLQGCGGDVVQAIEQ.

It belongs to the DMRT family.

The protein localises to the nucleus. In terms of biological role, may be involved in sexual development. The protein is Doublesex- and mab-3-related transcription factor A2 (dmrta2) of Xenopus laevis (African clawed frog).